Reading from the N-terminus, the 112-residue chain is Urocortin-2 (112 aa).

Positions 1–22 (MTRCALLLLMVLMLGRVLVVPV) are cleaved as a signal peptide. The propeptide occupies 23 to 70 (TPIPTFQLRPQNSPQTTPRPAASESPSAAPTWPWAAQSHCSPTRHPGS). Residues 27–66 (TFQLRPQNSPQTTPRPAASESPSAAPTWPWAAQSHCSPTR) are disordered. Residues 38–58 (TTPRPAASESPSAAPTWPWAA) show a composition bias toward low complexity.

This sequence belongs to the sauvagine/corticotropin-releasing factor/urotensin I family. As to quaternary structure, binds with high affinity to CRF receptors 2-alpha and 2-beta. Glycosylated.

The protein resides in the secreted. Suppresses food intake, delays gastric emptying and decreases heat-induced edema. Might represent an endogenous ligand for maintaining homeostasis after stress. The chain is Urocortin-2 (UCN2) from Homo sapiens (Human).